The sequence spans 702 residues: Polyribonucleotide nucleotidyltransferase (702 aa).

Residues D485 and D491 each coordinate Mg(2+). The KH domain occupies P552–I612. In terms of domain architecture, S1 motif spans G622–K690.

This sequence belongs to the polyribonucleotide nucleotidyltransferase family. It depends on Mg(2+) as a cofactor.

It localises to the cytoplasm. It catalyses the reaction RNA(n+1) + phosphate = RNA(n) + a ribonucleoside 5'-diphosphate. Functionally, involved in mRNA degradation. Catalyzes the phosphorolysis of single-stranded polyribonucleotides processively in the 3'- to 5'-direction. The chain is Polyribonucleotide nucleotidyltransferase from Clostridium botulinum (strain 657 / Type Ba4).